We begin with the raw amino-acid sequence, 457 residues long: Siroheme synthase (457 aa).

The precorrin-2 dehydrogenase /sirohydrochlorin ferrochelatase stretch occupies residues 1 to 204 (MDHLPIFCQL…ADEKAVNATT (204 aa)). NAD(+) is bound by residues 22–23 (DV) and 43–44 (LT). Serine 128 carries the post-translational modification Phosphoserine. The uroporphyrinogen-III C-methyltransferase stretch occupies residues 216-457 (GEVVLVGAGP…RDKLNWFSSH (242 aa)). An S-adenosyl-L-methionine-binding site is contributed by proline 225. Aspartate 248 functions as the Proton acceptor in the catalytic mechanism. Lysine 270 functions as the Proton donor in the catalytic mechanism. S-adenosyl-L-methionine is bound by residues 301–303 (GGD), isoleucine 306, 331–332 (TA), methionine 382, and glycine 411.

In the N-terminal section; belongs to the precorrin-2 dehydrogenase / sirohydrochlorin ferrochelatase family. It in the C-terminal section; belongs to the precorrin methyltransferase family.

The catalysed reaction is uroporphyrinogen III + 2 S-adenosyl-L-methionine = precorrin-2 + 2 S-adenosyl-L-homocysteine + H(+). It carries out the reaction precorrin-2 + NAD(+) = sirohydrochlorin + NADH + 2 H(+). The enzyme catalyses siroheme + 2 H(+) = sirohydrochlorin + Fe(2+). It functions in the pathway cofactor biosynthesis; adenosylcobalamin biosynthesis; precorrin-2 from uroporphyrinogen III: step 1/1. It participates in cofactor biosynthesis; adenosylcobalamin biosynthesis; sirohydrochlorin from precorrin-2: step 1/1. The protein operates within porphyrin-containing compound metabolism; siroheme biosynthesis; precorrin-2 from uroporphyrinogen III: step 1/1. Its pathway is porphyrin-containing compound metabolism; siroheme biosynthesis; siroheme from sirohydrochlorin: step 1/1. It functions in the pathway porphyrin-containing compound metabolism; siroheme biosynthesis; sirohydrochlorin from precorrin-2: step 1/1. Functionally, multifunctional enzyme that catalyzes the SAM-dependent methylations of uroporphyrinogen III at position C-2 and C-7 to form precorrin-2 via precorrin-1. Then it catalyzes the NAD-dependent ring dehydrogenation of precorrin-2 to yield sirohydrochlorin. Finally, it catalyzes the ferrochelation of sirohydrochlorin to yield siroheme. This Salmonella arizonae (strain ATCC BAA-731 / CDC346-86 / RSK2980) protein is Siroheme synthase.